The primary structure comprises 426 residues: MAALNLSKRSICETCGHQGWKNSLVTCSKCRIACEHCYCMRESSFETSIHFVCADCSMRPVQNKFTSDSIKGVPRSIRNKVRVESSNPVPKWKKIPETSRMKLISPEEVKKLACGGSTSKPTFRVPRPVSARPPMGLTKPTAGFPRARSLNSTVVARKTKSIYLPPKKVEPLSPRTQQIRPGVMRQASKAQAVGEGSKSKVGDGAKYHDSNEICRSILSEKLLQLLPYRPALHPIWKGRIVDSATPSEFNGEFLAQPASKVRGKAYILSKAIPVLLKVKLVPIGNLLSGLFMNRKPGLSDVEMYIFPDDKNTKRFTAERDHIFEAMRIRNAMMKFNINGTPLLIFSSKLLDKSSQIIIKMQKKTNNFLWGIFLLTKKSLALLPGTSNQTPQHFDDGYVVDNDTEPFFRRYHRNCGKQLQRHYGQRD.

A PHD-type zinc finger spans residues 9–59 (RSICETCGHQGWKNSLVTCSKCRIACEHCYCMRESSFETSIHFVCADCSMR). Zn(2+) is bound by residues Cys12, Cys15, Cys27, Cys30, His36, Cys39, Cys53, and Cys56. Disordered regions lie at residues 122-144 (TFRVPRPVSARPPMGLTKPTAGF) and 185-205 (RQASKAQAVGEGSKSKVGDGA).

As to quaternary structure, interacts directly with AIPP3/BDT1.

Functionally, together with AIPP3/BDT1, cooperates to form a BAH-PHD bivalent histone reader complex able to read histone H3 lysine 27 trimethylation (H3K27me3) histone marks in order to regulate transcription, especially to prevent early flowering; promotes AIPP3/BDT1 binding to H3K27me3. This chain is PHD finger-containing protein 6, found in Arabidopsis thaliana (Mouse-ear cress).